Here is a 387-residue protein sequence, read N- to C-terminus: S-adenosylmethionine synthase (387 aa).

H15 serves as a coordination point for ATP. D17 provides a ligand contact to Mg(2+). Residue E43 participates in K(+) binding. L-methionine is bound by residues E56 and Q99. The interval 99 to 109 (QSPDIAQGVNA) is flexible loop. ATP contacts are provided by residues 166–168 (DAK), 232–233 (RF), D241, 247–248 (RK), A264, and K268. L-methionine is bound at residue D241. K272 provides a ligand contact to L-methionine.

The protein belongs to the AdoMet synthase family. Homotetramer; dimer of dimers. Mg(2+) is required as a cofactor. Requires K(+) as cofactor.

It is found in the cytoplasm. It carries out the reaction L-methionine + ATP + H2O = S-adenosyl-L-methionine + phosphate + diphosphate. The protein operates within amino-acid biosynthesis; S-adenosyl-L-methionine biosynthesis; S-adenosyl-L-methionine from L-methionine: step 1/1. In terms of biological role, catalyzes the formation of S-adenosylmethionine (AdoMet) from methionine and ATP. The overall synthetic reaction is composed of two sequential steps, AdoMet formation and the subsequent tripolyphosphate hydrolysis which occurs prior to release of AdoMet from the enzyme. The chain is S-adenosylmethionine synthase from Dechloromonas aromatica (strain RCB).